Here is a 1396-residue protein sequence, read N- to C-terminus: DNA-directed RNA polymerase subunit beta' (1396 aa).

Zn(2+)-binding residues include cysteine 73, cysteine 75, cysteine 88, and cysteine 91. Residues aspartate 467, aspartate 469, and aspartate 471 each contribute to the Mg(2+) site. Zn(2+)-binding residues include cysteine 817, cysteine 891, cysteine 898, and cysteine 901.

Belongs to the RNA polymerase beta' chain family. In terms of assembly, the RNAP catalytic core consists of 2 alpha, 1 beta, 1 beta' and 1 omega subunit. When a sigma factor is associated with the core the holoenzyme is formed, which can initiate transcription. Requires Mg(2+) as cofactor. The cofactor is Zn(2+).

It carries out the reaction RNA(n) + a ribonucleoside 5'-triphosphate = RNA(n+1) + diphosphate. Its function is as follows. DNA-dependent RNA polymerase catalyzes the transcription of DNA into RNA using the four ribonucleoside triphosphates as substrates. The chain is DNA-directed RNA polymerase subunit beta' from Orientia tsutsugamushi (strain Ikeda) (Rickettsia tsutsugamushi).